Here is a 520-residue protein sequence, read N- to C-terminus: Protein-export membrane protein SecD (520 aa).

Helical transmembrane passes span 10 to 30, 364 to 384, 391 to 411, 417 to 437, 461 to 481, and 483 to 503; these read IILL…PTLA, DSLL…FLRY, LPMI…AAGI, LSVI…LVII, FWVI…LAIL, and LGDL…GVLI.

Belongs to the SecD/SecF family. SecD subfamily. In terms of assembly, part of the protein translocation apparatus. Forms a complex with SecF.

It is found in the cell membrane. Involved in protein export. In Haloquadratum walsbyi (strain DSM 16790 / HBSQ001), this protein is Protein-export membrane protein SecD.